A 138-amino-acid polypeptide reads, in one-letter code: uncharacterized protein (138 aa).

2 helical membrane-spanning segments follow: residues 1-21 (MEIG…EAIV) and 46-66 (YAFI…HKFV).

It localises to the cell membrane. This is an uncharacterized protein from Methanocaldococcus jannaschii (strain ATCC 43067 / DSM 2661 / JAL-1 / JCM 10045 / NBRC 100440) (Methanococcus jannaschii).